The primary structure comprises 190 residues: Large ribosomal subunit protein bL9 (190 aa).

Belongs to the bacterial ribosomal protein bL9 family.

Functionally, binds to the 23S rRNA. The protein is Large ribosomal subunit protein bL9 of Rhodobacter capsulatus (strain ATCC BAA-309 / NBRC 16581 / SB1003).